Here is a 285-residue protein sequence, read N- to C-terminus: RNA polymerase sigma factor RpoH (285 aa).

Residues 53 to 122 (LILSHLRFVV…IHEYVLRNWR (70 aa)) form a sigma-70 factor domain-2 region. Positions 77–80 (DLIQ) match the Interaction with polymerase core subunit RpoC motif. Positions 229 to 281 (AMEGLDERSQDIIRARWLDEDNKSTLQELADRYGVSAERVRQLEKNAMKKLRA) are sigma-70 factor domain-4. Positions 254-273 (LQELADRYGVSAERVRQLEK) form a DNA-binding region, H-T-H motif.

The protein belongs to the sigma-70 factor family. RpoH subfamily. In terms of assembly, interacts with the RNA polymerase core enzyme.

Its subcellular location is the cytoplasm. In terms of biological role, sigma factors are initiation factors that promote the attachment of RNA polymerase to specific initiation sites and are then released. This sigma factor is involved in regulation of expression of heat shock genes. In Enterobacter cloacae, this protein is RNA polymerase sigma factor RpoH.